The primary structure comprises 155 residues: Transcriptional repressor NrdR (155 aa).

A compositionally biased stretch (basic residues) spans 1–10; that stretch reads MQCPHCHHNS. The interval 1-21 is disordered; that stretch reads MQCPHCHHNSSRVVDSRPTDG. A zinc finger lies at 3–34; that stretch reads CPHCHHNSSRVVDSRPTDGGRAIRRRRECENC. The ATP-cone domain maps to 49-139; that stretch reads LLVIKKNGTR…VYRQFKDMSV (91 aa).

This sequence belongs to the NrdR family. The cofactor is Zn(2+).

Negatively regulates transcription of bacterial ribonucleotide reductase nrd genes and operons by binding to NrdR-boxes. This Lacticaseibacillus casei (strain BL23) (Lactobacillus casei) protein is Transcriptional repressor NrdR.